We begin with the raw amino-acid sequence, 501 residues long: Cytokinin dehydrogenase 2 (501 aa).

The N-terminal stretch at 1-22 (MANLRLMITLITVLMITKSSNG) is a signal peptide. Residues Asn32 and Asn51 are each glycosylated (N-linked (GlcNAc...) asparagine). Positions 53–226 (TTVTPGGVIC…TRARIVLDHA (174 aa)) constitute an FAD-binding PCMH-type domain. Residues Ala87, Gly89, and Gly91 each contribute to the FAD site. His92 is subject to Pros-8alpha-FAD histidine. Ser93 and Gln97 together coordinate FAD. A glycan (N-linked (GlcNAc...) asparagine) is linked at Asn107. Residues Asp150, Thr155, Ser161, Ile165, Ile216, Tyr460, Ser495, and Gln498 each contribute to the FAD site.

This sequence belongs to the oxygen-dependent FAD-linked oxidoreductase family. Requires FAD as cofactor. Expressed in the shoot apex, in stipules, and occasionally in the most apical part of the inflorescence stems. Not detected in roots.

Its subcellular location is the endoplasmic reticulum. The protein resides in the secreted. It is found in the extracellular space. It carries out the reaction N(6)-dimethylallyladenine + A + H2O = 3-methyl-2-butenal + adenine + AH2. Functionally, catalyzes the oxidation of cytokinins, a family of N(6)-substituted adenine derivatives that are plant hormones, where the substituent is an isopentenyl group. Modulates asymmetric cytokinin signaling in emerged lateral roots. Its activity determines cell elongation and number in emerged lateral roots and defines angular growth of lateral roots. The sequence is that of Cytokinin dehydrogenase 2 (CKX2) from Arabidopsis thaliana (Mouse-ear cress).